The following is an 826-amino-acid chain: Lon protease (826 aa).

The region spanning 26 to 221 (LPMLPVRDVV…AVNGFVSREV (196 aa)) is the Lon N-terminal domain. 373-380 (GPPGVGKT) contributes to the ATP binding site. Residues 609–790 (EPQIGLATGL…NEVLEKALLP (182 aa)) enclose the Lon proteolytic domain. Active-site residues include Ser696 and Lys739. Residues 788 to 826 (LLPAEKKKAPPKKKPPKKAAKPKAKKTQPKAKTTEAADK) form a disordered region. The segment covering 796-816 (APPKKKPPKKAAKPKAKKTQP) has biased composition (basic residues).

Belongs to the peptidase S16 family. As to quaternary structure, homohexamer. Organized in a ring with a central cavity.

The protein resides in the cytoplasm. It catalyses the reaction Hydrolysis of proteins in presence of ATP.. Functionally, ATP-dependent serine protease that mediates the selective degradation of mutant and abnormal proteins as well as certain short-lived regulatory proteins. Required for cellular homeostasis and for survival from DNA damage and developmental changes induced by stress. Degrades polypeptides processively to yield small peptide fragments that are 5 to 10 amino acids long. Binds to DNA in a double-stranded, site-specific manner. This chain is Lon protease, found in Desulfatibacillum aliphaticivorans.